The chain runs to 115 residues: MTEYNANSIRAKILRRKILQLIAENYVLSASLISHTLLLSYATVLRHLRILNDEGYIELYKQGRTLYAKIRDNAKQIQILNSELEGFKNVSGKPILTKDETPKEFGKKDSLTQRG.

An HTH arsR-type domain is found at 1–91; that stretch reads MTEYNANSIR…SELEGFKNVS (91 aa). The H-T-H motif DNA-binding region spans 30–53; sequence ASLISHTLLLSYATVLRHLRILND.

Essential for virus function. This is an uncharacterized protein from Saccharolobus solfataricus (Sulfolobus solfataricus).